The primary structure comprises 300 residues: NAD kinase (300 aa).

The active-site Proton acceptor is Asp75. NAD(+) is bound by residues 75 to 76, 149 to 150, Arg177, Asp179, 190 to 195, Ala214, and Gln248; these read DG, ND, and TAYALS.

This sequence belongs to the NAD kinase family. The cofactor is a divalent metal cation.

The protein resides in the cytoplasm. The catalysed reaction is NAD(+) + ATP = ADP + NADP(+) + H(+). Functionally, involved in the regulation of the intracellular balance of NAD and NADP, and is a key enzyme in the biosynthesis of NADP. Catalyzes specifically the phosphorylation on 2'-hydroxyl of the adenosine moiety of NAD to yield NADP. The polypeptide is NAD kinase (Paraburkholderia phymatum (strain DSM 17167 / CIP 108236 / LMG 21445 / STM815) (Burkholderia phymatum)).